Here is a 312-residue protein sequence, read N- to C-terminus: Aquaporin Lacbi1:391485 (312 aa).

Residues 1-50 lie on the Cytoplasmic side of the membrane; that stretch reads MDDKFDDDALPNSKTTPEDYGDKLAEYDYTNTFPNTWMRLREPFREYIAE. Residues 51 to 71 form a helical membrane-spanning segment; it reads FVGVAVLIIFGVGADCQVVLS. The Extracellular segment spans residues 72–89; that stretch reads ANTGVAPSPKGDYLSLNC. Residues 90–110 traverse the membrane as a helical segment; the sequence is GWAIGTAMGVWISGGISGGHI. The NPA 1 signature appears at 111 to 113; that stretch reads NPA. Residues 111–128 are Cytoplasmic-facing; it reads NPAVTLALMAWRGFPWWK. Residues 129-149 form a helical membrane-spanning segment; it reads VPGFIFAQLLGGIVGAGLVYV. Topologically, residues 150-183 are extracellular; the sequence is NYIHAIDIVEGGRHIRTLDTAGLFATYAADYMTN. Asparagine 183 carries N-linked (GlcNAc...) asparagine glycosylation. A helical transmembrane segment spans residues 184-204; sequence VSCFFSEFLATAVLIVVIHAM. The Cytoplasmic portion of the chain corresponds to 205 to 213; that stretch reads NDKRNAPPP. Residues 214–234 traverse the membrane as a helical segment; that stretch reads AGLAPLVLFFLILGIGASLGM. The Extracellular portion of the chain corresponds to 235-267; it reads ETGYAINPARDLGPRMLTAMVGYGRQVFAFRNQ. The NPA 2 signature appears at 241-243; it reads NPA. The helical transmembrane segment at 268–288 threads the bilayer; that stretch reads YWIWCPVIAPFLGAQVGTIFY. Over 289 to 312 the chain is Cytoplasmic; sequence DLFFYKGQDNVFGRLGSHIHISPA.

It belongs to the MIP/aquaporin (TC 1.A.8) family.

It localises to the membrane. The enzyme catalyses H2O(in) = H2O(out). It catalyses the reaction glycerol(in) = glycerol(out). It carries out the reaction NH4(+)(in) = NH4(+)(out). Functionally, water channel required to facilitate the transport of water across membranes. In addition to water, also shows strong glycerol and ammonium transport activities. May be involved in fungal nitrogen (ammonium) support of the plant host in symbiosis. Glycerol accumulation has never been observed in ectomycorrhizal (ECM) fungi, therefore, glycerol permeability of Lacbi1:391485 might be a relict of the affiliation of the protein to the group of aquaglyceroporins, and other osmotic active compounds (e.g. trehalose or mannitol) may have taken over glycerol function in ECM fungi. The chain is Aquaporin Lacbi1:391485 from Laccaria bicolor (strain S238N-H82 / ATCC MYA-4686) (Bicoloured deceiver).